We begin with the raw amino-acid sequence, 235 residues long: Ribonuclease 3 (235 aa).

An RNase III domain is found at 6 to 131 (IDQLKKLTGH…LIAVIYLDGG (126 aa)). E44 serves as a coordination point for Mg(2+). The active site involves D48. Residues D117 and E120 each contribute to the Mg(2+) site. E120 is a catalytic residue. In terms of domain architecture, DRBM spans 156-225 (DAKTELQEWA…AEKILRREGM (70 aa)).

This sequence belongs to the ribonuclease III family. In terms of assembly, homodimer. It depends on Mg(2+) as a cofactor.

It localises to the cytoplasm. It catalyses the reaction Endonucleolytic cleavage to 5'-phosphomonoester.. In terms of biological role, digests double-stranded RNA. Involved in the processing of primary rRNA transcript to yield the immediate precursors to the large and small rRNAs (23S and 16S). Processes some mRNAs, and tRNAs when they are encoded in the rRNA operon. Processes pre-crRNA and tracrRNA of type II CRISPR loci if present in the organism. The protein is Ribonuclease 3 of Bartonella bacilliformis (strain ATCC 35685 / KC583 / Herrer 020/F12,63).